The chain runs to 321 residues: Cytochrome c biogenesis protein CcsA (321 aa).

7 consecutive transmembrane segments (helical) span residues 9–29, 44–64, 68–88, 143–163, 225–245, 259–273, and 288–308; these read ILTHISFSTISIVITIHLITL, GMIATFFSITGFLVSRWVSSG, LSNLYESLIFLSWTLYILHTI, MLLSYATLLCGSLLSAALLII, VISLGFTLLTVGILCGAVWAN, TWAFITWTIFAIYLH, and VASIGFLIIWICYFGINLLGI.

The protein belongs to the CcmF/CycK/Ccl1/NrfE/CcsA family. May interact with Ccs1.

It is found in the plastid. It localises to the chloroplast thylakoid membrane. In terms of biological role, required during biogenesis of c-type cytochromes (cytochrome c6 and cytochrome f) at the step of heme attachment. The polypeptide is Cytochrome c biogenesis protein CcsA (Saccharum hybrid (Sugarcane)).